A 128-amino-acid polypeptide reads, in one-letter code: uncharacterized protein (128 aa).

This is an uncharacterized protein from Vaccinia virus (strain Copenhagen) (VACV).